Reading from the N-terminus, the 92-residue chain is uncharacterized protein (92 aa).

Residues Met-1–Glu-92 enclose the HTH arsR-type domain. The H-T-H motif DNA-binding region spans Ile-37 to Asp-61.

This is an uncharacterized protein from Bacillus subtilis (strain 168).